The following is a 709-amino-acid chain: MSKQVFEMIFAGKKLVVETGQVAKQANGSVVVRYGDSTVLTAAVMSKKMSTGDFFPLQVNYEEKMYAAGKFPGGFNKREGRPSTDATLTARLIDRPIRPMFAEGFRNEVQVINTVLSFDENASAPMAAMFGSSLALSISDIPFNGPIAGVQVAYVDGNFIINPTAQEQEASALELTVAGTKEAINMVESGAKELSEEIMLEALLKGHEAVCELIAFQEEIVTAIGKEKAEVELLQVDPELQAEIIATHNIALQAAVQVEEKKAREAATEAVKEVVIGEYEARYAEHEEYDRIMRDVAEILEQMEHAEVRRLITEDKVRPDGRRVDEIRPLDAVIDFLPQVHGSGLFTRGQTQALSVLTLAPMGEAQIIDGLTPEYKKRFMHHYNFPQYSVGETGRYGAAGRREIGHGALGERALEQVLPSLEEFPYAIRLVAEVLESNGSSSQASICAGTLALMAGGVPIKAPVAGIAMGLISDGTNYTVLTDIQGLEDHFGDMDFKVAGTREGITALQMDIKIEGITPQILEEALAQAKKARFEILDVLHGAIAEPRPQLAPTAPKIDMIKIDVDKIKVVIGKGGETIDKIIAETGVKIDIDEEGNVSIFSSDQAAIDRTKDIIASLVREAKVGEVYHAKVVRIEKFGAFVNLFDKTDALVHISEIAWTRTANVADVLEIGEEVDVKVIKIDDKGRVDASMKALLPRPPKADNPKKES.

Residues Asp-489 and Asp-495 each coordinate Mg(2+). A KH domain is found at 556-615 (PKIDMIKIDVDKIKVVIGKGGETIDKIIAETGVKIDIDEEGNVSIFSSDQAAIDRTKDII). The S1 motif domain maps to 625 to 693 (GEVYHAKVVR…DKGRVDASMK (69 aa)).

The protein belongs to the polyribonucleotide nucleotidyltransferase family. Mg(2+) is required as a cofactor.

It localises to the cytoplasm. The catalysed reaction is RNA(n+1) + phosphate = RNA(n) + a ribonucleoside 5'-diphosphate. Functionally, involved in mRNA degradation. Catalyzes the phosphorolysis of single-stranded polyribonucleotides processively in the 3'- to 5'-direction. The polypeptide is Polyribonucleotide nucleotidyltransferase (Streptococcus agalactiae serotype III (strain NEM316)).